Consider the following 142-residue polypeptide: uncharacterized protein (142 aa).

It belongs to the GlcG family.

This is an uncharacterized protein from Citrobacter freundii.